Consider the following 376-residue polypeptide: Bifunctional enzyme IspD/IspF (376 aa).

The interval 1–220 (MRIAAILVAG…RSMSISMIPR (220 aa)) is 2-C-methyl-D-erythritol 4-phosphate cytidylyltransferase. Residues 220-376 (RIGTGYDVHA…QAAVIIMIPA (157 aa)) are 2-C-methyl-D-erythritol 2,4-cyclodiphosphate synthase. 2 residues coordinate a divalent metal cation: D226 and H228. Residues 226–228 (DVH) and 252–253 (HS) each bind 4-CDP-2-C-methyl-D-erythritol 2-phosphate. H260 contributes to the a divalent metal cation binding site. Residues 274-276 (DIG), 350-353 (TTSE), F357, and R360 contribute to the 4-CDP-2-C-methyl-D-erythritol 2-phosphate site.

The protein in the N-terminal section; belongs to the IspD/TarI cytidylyltransferase family. IspD subfamily. In the C-terminal section; belongs to the IspF family. The cofactor is a divalent metal cation.

It catalyses the reaction 2-C-methyl-D-erythritol 4-phosphate + CTP + H(+) = 4-CDP-2-C-methyl-D-erythritol + diphosphate. It carries out the reaction 4-CDP-2-C-methyl-D-erythritol 2-phosphate = 2-C-methyl-D-erythritol 2,4-cyclic diphosphate + CMP. The protein operates within isoprenoid biosynthesis; isopentenyl diphosphate biosynthesis via DXP pathway; isopentenyl diphosphate from 1-deoxy-D-xylulose 5-phosphate: step 2/6. It functions in the pathway isoprenoid biosynthesis; isopentenyl diphosphate biosynthesis via DXP pathway; isopentenyl diphosphate from 1-deoxy-D-xylulose 5-phosphate: step 4/6. Functionally, bifunctional enzyme that catalyzes the formation of 4-diphosphocytidyl-2-C-methyl-D-erythritol from CTP and 2-C-methyl-D-erythritol 4-phosphate (MEP) (IspD), and catalyzes the conversion of 4-diphosphocytidyl-2-C-methyl-D-erythritol 2-phosphate (CDP-ME2P) to 2-C-methyl-D-erythritol 2,4-cyclodiphosphate (ME-CPP) with a corresponding release of cytidine 5-monophosphate (CMP) (IspF). The chain is Bifunctional enzyme IspD/IspF from Granulibacter bethesdensis (strain ATCC BAA-1260 / CGDNIH1).